A 240-amino-acid polypeptide reads, in one-letter code: Uridylate kinase (240 aa).

15–18 (KLSG) contributes to the ATP binding site. Residues 23 to 28 (GSEGFG) form an involved in allosteric activation by GTP region. Gly-57 contacts UMP. ATP contacts are provided by Gly-58 and Arg-62. Residues Asp-77 and 138–145 (TGNPFFTT) each bind UMP. ATP-binding residues include Thr-165, Tyr-171, and Asp-174.

It belongs to the UMP kinase family. As to quaternary structure, homohexamer.

The protein localises to the cytoplasm. It carries out the reaction UMP + ATP = UDP + ADP. Its pathway is pyrimidine metabolism; CTP biosynthesis via de novo pathway; UDP from UMP (UMPK route): step 1/1. Its activity is regulated as follows. Allosterically activated by GTP. Inhibited by UTP. Catalyzes the reversible phosphorylation of UMP to UDP. This Photobacterium profundum (strain SS9) protein is Uridylate kinase.